A 71-amino-acid polypeptide reads, in one-letter code: MANDVIEIEGKVKETLPNAMFQVELENGAVILAHVSGKIRKNFIRILPGDRVTVEMSPYDLTKGRITYRFR.

The S1-like domain occupies 1–71 (MANDVIEIEG…TKGRITYRFR (71 aa)).

This sequence belongs to the IF-1 family. Component of the 30S ribosomal translation pre-initiation complex which assembles on the 30S ribosome in the order IF-2 and IF-3, IF-1 and N-formylmethionyl-tRNA(fMet); mRNA recruitment can occur at any time during PIC assembly.

The protein resides in the cytoplasm. In terms of biological role, one of the essential components for the initiation of protein synthesis. Stabilizes the binding of IF-2 and IF-3 on the 30S subunit to which N-formylmethionyl-tRNA(fMet) subsequently binds. Helps modulate mRNA selection, yielding the 30S pre-initiation complex (PIC). Upon addition of the 50S ribosomal subunit IF-1, IF-2 and IF-3 are released leaving the mature 70S translation initiation complex. This Leuconostoc mesenteroides subsp. mesenteroides (strain ATCC 8293 / DSM 20343 / BCRC 11652 / CCM 1803 / JCM 6124 / NCDO 523 / NBRC 100496 / NCIMB 8023 / NCTC 12954 / NRRL B-1118 / 37Y) protein is Translation initiation factor IF-1.